Reading from the N-terminus, the 663-residue chain is Rap1 GTPase-activating protein 1 (663 aa).

One can recognise a GoLoco domain in the interval 1–17; sequence MIEKMQGSRMDEQRCSF. The segment at 1–23 is disordered; the sequence is MIEKMQGSRMDEQRCSFPPPLKT. Phe17 is modified (phosphoserine). A Rap-GAP domain is found at 181 to 397; that stretch reads IVTFDEHVIS…RTRAALLETL (217 aa). Ser441 is modified (phosphoserine). Disordered stretches follow at residues 442–604 and 616–645; these read MDAM…PHKR and SVSTTSGGSSPGPSRSPHPDAGKLGDPACP. Residues 450 to 465 are compositionally biased toward polar residues; sequence KKPNTVSTSHSGSFAP. Phosphoserine occurs at positions 484, 499, 515, 541, and 542. Residues 535–549 show a composition bias toward polar residues; sequence ENSSTQSSPEMPTTK. The span at 567–579 shows a compositional bias: low complexity; that stretch reads RSSSSASSFASVV. A compositionally biased stretch (acidic residues) spans 580–591; it reads EETEGVDGEDTG. Positions 616-630 are enriched in low complexity; the sequence is SVSTTSGGSSPGPSR.

In terms of assembly, homodimer and heterodimer with RAP1B. In terms of tissue distribution, significant expression seen in the brain, kidney and pancreas. Abundant in the cerebral cortex and expressed at much lower levels in the spinal cord. Not detected in the lymphoid tissues.

The protein localises to the golgi apparatus membrane. Its function is as follows. GTPase activator for the nuclear Ras-related regulatory protein RAP-1A (KREV-1), converting it to the putatively inactive GDP-bound state. The polypeptide is Rap1 GTPase-activating protein 1 (RAP1GAP) (Homo sapiens (Human)).